Reading from the N-terminus, the 101-residue chain is Phosphoribosyl-AMP cyclohydrolase (101 aa).

Residue aspartate 71 coordinates Mg(2+). Cysteine 72 is a Zn(2+) binding site. 2 residues coordinate Mg(2+): aspartate 73 and aspartate 75. 2 residues coordinate Zn(2+): cysteine 88 and cysteine 95.

The protein belongs to the PRA-CH family. Homodimer. The cofactor is Mg(2+). Zn(2+) is required as a cofactor.

It localises to the cytoplasm. It catalyses the reaction 1-(5-phospho-beta-D-ribosyl)-5'-AMP + H2O = 1-(5-phospho-beta-D-ribosyl)-5-[(5-phospho-beta-D-ribosylamino)methylideneamino]imidazole-4-carboxamide. The protein operates within amino-acid biosynthesis; L-histidine biosynthesis; L-histidine from 5-phospho-alpha-D-ribose 1-diphosphate: step 3/9. Functionally, catalyzes the hydrolysis of the adenine ring of phosphoribosyl-AMP. This is Phosphoribosyl-AMP cyclohydrolase from Bacillus cereus (strain B4264).